The chain runs to 276 residues: Undecaprenyl-diphosphatase (276 aa).

Helical transmembrane passes span 12–34 (LGIVEGLTEFLPISSTGHLIVVG), 43–63 (TATAFKIIIQLGAILAVMWEF), 85–105 (FNLLLAFIPAVVFGLAFADLI), 108–128 (WLFNPITVATALIVGGIIMLW), 185–205 (TEFSFFLAMPTMIAATVYSLF), 218–238 (IFAIGFVSTFIVAMITVRALL), and 249–269 (FAWYRIAFGLVILATWQLHLI).

It belongs to the UppP family.

It localises to the cell inner membrane. The enzyme catalyses di-trans,octa-cis-undecaprenyl diphosphate + H2O = di-trans,octa-cis-undecaprenyl phosphate + phosphate + H(+). Its function is as follows. Catalyzes the dephosphorylation of undecaprenyl diphosphate (UPP). Confers resistance to bacitracin. In Ectopseudomonas mendocina (strain ymp) (Pseudomonas mendocina), this protein is Undecaprenyl-diphosphatase.